The primary structure comprises 385 residues: Taurine hydroxylase-like protein SAT17 (385 aa).

Its pathway is mycotoxin biosynthesis. Its function is as follows. Taurine hydroxylase-like protein; part of the satratoxin SC3 cluster involved in the biosynthesis of satratoxins, trichothecene mycotoxins that are associated with human food poisonings. Satratoxins are suggested to be made by products of multiple gene clusters (SC1, SC2 and SC3) that encode 21 proteins in all, including polyketide synthases, acetyltransferases, and other enzymes expected to modify the trichothecene skeleton. SC1 encodes 10 proteins, SAT1 to SAT10. The largest are SAT8, which encodes a putative polyketide synthase (PKS) with a conventional non-reducing architecture, and SAT10, a putative protein containing four ankyrin repeats and thus may be involved in protein scaffolding. The putative short-chain reductase SAT3 may assist the PKS in some capacity. SAT6 contains a secretory lipase domain and acts probably as a trichothecene esterase. SAT5 encodes a putative acetyltransferase, and so, with SAT6, may affect endogenous protection from toxicity. The probable transcription factor SAT9 may regulate the expression of the SC1 cluster. SC2 encodes proteins SAT11 to SAT16, the largest of which encodes the putative reducing PKS SAT13. SAT11 is a cytochrome P450 monooxygenase, while SAT14 and SAT16 are probable acetyltransferases. The SC2 cluster may be regulated by the transcription factor SAT15. SC3 is a small cluster that encodes 5 proteins, SAT17 to SAT21. SAT21 is a putative MFS-type transporter which may have a role in exporting secondary metabolites. The four other proteins putatively encoded in SC3 include the taurine hydroxylase-like protein SAT17, the O-methyltransferase SAT18, the acetyltransferase SAT19, and the Cys6-type zinc finger SAT20, the latter being probably involved in regulation of SC3 expression. This Stachybotrys chartarum (strain CBS 109288 / IBT 7711) (Toxic black mold) protein is Taurine hydroxylase-like protein SAT17.